The following is a 490-amino-acid chain: Inosine-5'-monophosphate dehydrogenase (490 aa).

2 CBS domains span residues 96–154 (MIIN…SKPV) and 158–218 (MTKE…CKDE). NAD(+)-binding positions include Asp-252 and 302-304 (GVG). Residues Gly-304 and Gly-306 each coordinate K(+). An IMP-binding site is contributed by Ser-307. Cys-309 is a K(+) binding site. Residue Cys-309 is the Thioimidate intermediate of the active site. IMP is bound by residues 342–344 (DGG), 365–366 (GN), and 389–393 (YRGMG). Arg-406 serves as the catalytic Proton acceptor. Glu-418 contributes to the IMP binding site. 3 residues coordinate K(+): Glu-472, Ser-473, and His-474.

The protein belongs to the IMPDH/GMPR family. As to quaternary structure, homotetramer. K(+) is required as a cofactor.

The enzyme catalyses IMP + NAD(+) + H2O = XMP + NADH + H(+). Its pathway is purine metabolism; XMP biosynthesis via de novo pathway; XMP from IMP: step 1/1. Its activity is regulated as follows. Mycophenolic acid (MPA) is a non-competitive inhibitor that prevents formation of the closed enzyme conformation by binding to the same site as the amobile flap. In contrast, mizoribine monophosphate (MZP) is a competitive inhibitor that induces the closed conformation. MPA is a potent inhibitor of mammalian IMPDHs but a poor inhibitor of the bacterial enzymes. MZP is a more potent inhibitor of bacterial IMPDH. Catalyzes the conversion of inosine 5'-phosphate (IMP) to xanthosine 5'-phosphate (XMP), the first committed and rate-limiting step in the de novo synthesis of guanine nucleotides, and therefore plays an important role in the regulation of cell growth. The sequence is that of Inosine-5'-monophosphate dehydrogenase from Aquifex aeolicus (strain VF5).